A 51-amino-acid polypeptide reads, in one-letter code: uncharacterized protein (51 aa).

This is an uncharacterized protein from Pseudoalteromonas espejiana (Bacteriophage PM2).